Consider the following 418-residue polypeptide: Light-independent protochlorophyllide reductase subunit N (418 aa).

The [4Fe-4S] cluster site is built by C17, C42, and C103.

The protein belongs to the BchN/ChlN family. As to quaternary structure, protochlorophyllide reductase is composed of three subunits; ChlL, ChlN and ChlB. Forms a heterotetramer of two ChlB and two ChlN subunits. [4Fe-4S] cluster serves as cofactor.

The catalysed reaction is chlorophyllide a + oxidized 2[4Fe-4S]-[ferredoxin] + 2 ADP + 2 phosphate = protochlorophyllide a + reduced 2[4Fe-4S]-[ferredoxin] + 2 ATP + 2 H2O. It functions in the pathway porphyrin-containing compound metabolism; chlorophyll biosynthesis (light-independent). Its function is as follows. Component of the dark-operative protochlorophyllide reductase (DPOR) that uses Mg-ATP and reduced ferredoxin to reduce ring D of protochlorophyllide (Pchlide) to form chlorophyllide a (Chlide). This reaction is light-independent. The NB-protein (ChlN-ChlB) is the catalytic component of the complex. The chain is Light-independent protochlorophyllide reductase subunit N from Prochlorococcus marinus (strain MIT 9211).